A 239-amino-acid chain; its full sequence is Ribosomal RNA small subunit methyltransferase G (239 aa).

Residues glycine 79, phenylalanine 84, 130-131 (AE), and arginine 149 each bind S-adenosyl-L-methionine. The tract at residues 218 to 239 (KKTKTPKKYPRQAGTPSKKPIS) is disordered.

This sequence belongs to the methyltransferase superfamily. RNA methyltransferase RsmG family.

The protein localises to the cytoplasm. Specifically methylates the N7 position of a guanine in 16S rRNA. The polypeptide is Ribosomal RNA small subunit methyltransferase G (Leuconostoc mesenteroides subsp. mesenteroides (strain ATCC 8293 / DSM 20343 / BCRC 11652 / CCM 1803 / JCM 6124 / NCDO 523 / NBRC 100496 / NCIMB 8023 / NCTC 12954 / NRRL B-1118 / 37Y)).